We begin with the raw amino-acid sequence, 510 residues long: MIWHVQNENFILDSTRIFMKAFHLLLFHGSFILPECILIFGLILLLMIDSTSDQKDIPWLYFISSTSLVMSITALLFRWKEEPMISFSGNFQTNNFNEIFQFLILLCSTLCIPLSVEYIECTEMAITEFLLFVLTATLGGMFLCGANDSITIFVAPECFSLCSYLLSGYTKRDVRSNEATTKYLLMGGASSSILVHGFSWLYGSSGGEIELQEIVNGLINTQMYNSPGISIALIFITVGIGFKLSPAPFHQWTPDVYEGSPTPVVAFLSVTSKVAASASATRIFDIPFYFSSNEWHLLLEILAILSMILGNLVAITQTSMKRMLAYSSIGQIGYVIIGIIVGDSNDGYASMITYMLFYISMNLGTFARIVSFGLRTGTDNIRDYAGLYTKDPFLALSSALCLLSLGGLPPLAGFFGKLHLFWCGWQAGLYFLVSIGLLTSVVSIYYYLKIIKLLMTGRNQEITPHVRNYRRSPLRSNNSIELSMIVCVIASTIPGISMNPIIAIAQDTLF.

13 helical membrane passes run Leu-24–Leu-44, Ile-57–Phe-77, Ile-99–Ile-119, Met-124–Cys-144, Ile-150–Thr-170, Tyr-183–Gly-203, Ile-229–Phe-249, Trp-295–Ile-315, Met-323–Asp-343, Gly-347–Ala-367, Ala-395–Phe-415, Leu-418–Leu-438, and Met-484–Ile-504.

The protein belongs to the complex I subunit 2 family. NDH is composed of at least 16 different subunits, 5 of which are encoded in the nucleus.

It is found in the plastid. It localises to the chloroplast thylakoid membrane. The catalysed reaction is a plastoquinone + NADH + (n+1) H(+)(in) = a plastoquinol + NAD(+) + n H(+)(out). The enzyme catalyses a plastoquinone + NADPH + (n+1) H(+)(in) = a plastoquinol + NADP(+) + n H(+)(out). Functionally, NDH shuttles electrons from NAD(P)H:plastoquinone, via FMN and iron-sulfur (Fe-S) centers, to quinones in the photosynthetic chain and possibly in a chloroplast respiratory chain. The immediate electron acceptor for the enzyme in this species is believed to be plastoquinone. Couples the redox reaction to proton translocation, and thus conserves the redox energy in a proton gradient. In Ceratophyllum demersum (Rigid hornwort), this protein is NAD(P)H-quinone oxidoreductase subunit 2 B, chloroplastic.